The primary structure comprises 98 residues: Co-chaperonin GroES (98 aa).

This sequence belongs to the GroES chaperonin family. Heptamer of 7 subunits arranged in a ring. Interacts with the chaperonin GroEL.

Its subcellular location is the cytoplasm. In terms of biological role, together with the chaperonin GroEL, plays an essential role in assisting protein folding. The GroEL-GroES system forms a nano-cage that allows encapsulation of the non-native substrate proteins and provides a physical environment optimized to promote and accelerate protein folding. GroES binds to the apical surface of the GroEL ring, thereby capping the opening of the GroEL channel. This Rhizobium leguminosarum bv. trifolii (strain WSM2304) protein is Co-chaperonin GroES.